The chain runs to 260 residues: Sphinganine C4-monooxygenase 1 (260 aa).

3 helical membrane passes run 11–31 (LLGTVAPIVVYWLYSGIYVAL), 55–75 (SVVKGVLVQQVVQAVVAILLF), and 92–112 (FLVLARQFVTAMIVLDTWQYF). Positions 99–235 (FVTAMIVLDT…FVMWDRILGT (137 aa)) constitute a Fatty acid hydroxylase domain. The short motif at 114 to 118 (HRYMH) is the Histidine box-1 element. Positions 128-132 (HSQHH) match the Histidine box-2 motif. The Histidine box-3 signature appears at 207 to 213 (YHDIHHQ).

Belongs to the sterol desaturase family. Fe cation serves as cofactor. Ubiquitous, with higher levels in flowers and roots.

Its subcellular location is the endoplasmic reticulum membrane. It carries out the reaction a dihydroceramide + 2 Fe(II)-[cytochrome b5] + O2 + 2 H(+) = a phytoceramide + 2 Fe(III)-[cytochrome b5] + H2O. Its pathway is membrane lipid metabolism; sphingolipid biosynthesis. Functionally, involved in sphingolipid trihydroxy long-chain base (4-hydroxysphinganine) biosynthesis. Can use C18- and C20-sphinganine as substrates to produce C18- and C20-phytosphinganines (D-ribo-2-amino-1,3,4-trihydroxyoctadecane and -eicosane). This Arabidopsis thaliana (Mouse-ear cress) protein is Sphinganine C4-monooxygenase 1 (SBH1).